Here is a 192-residue protein sequence, read N- to C-terminus: MSSKEQKTPNEQVSEEMENTAEQQVEATQETGECVDPRVAELEVQLSDALQRERESLLRAKAEVENIRRRTELDVEKAHKFALERFSSELLPVIDNLERALDTADKTNTELTSMIEGVELTLKSLLDAVGKFGIEVVGETHVPFNPEVHQAMTMLESADHEPNHVMMVMQKGYTLNGRLLRPAMVAVSKAKS.

Residues 1-34 are disordered; it reads MSSKEQKTPNEQVSEEMENTAEQQVEATQETGEC. Over residues 20-31 the composition is skewed to polar residues; that stretch reads TAEQQVEATQET.

This sequence belongs to the GrpE family. Homodimer.

It localises to the cytoplasm. Participates actively in the response to hyperosmotic and heat shock by preventing the aggregation of stress-denatured proteins, in association with DnaK and GrpE. It is the nucleotide exchange factor for DnaK and may function as a thermosensor. Unfolded proteins bind initially to DnaJ; upon interaction with the DnaJ-bound protein, DnaK hydrolyzes its bound ATP, resulting in the formation of a stable complex. GrpE releases ADP from DnaK; ATP binding to DnaK triggers the release of the substrate protein, thus completing the reaction cycle. Several rounds of ATP-dependent interactions between DnaJ, DnaK and GrpE are required for fully efficient folding. The chain is Protein GrpE from Yersinia pseudotuberculosis serotype I (strain IP32953).